The following is a 100-amino-acid chain: Small cysteine and glycine repeat-containing protein 3 (100 aa).

A 13 X 2 AA repeats of CG region spans residues 4 to 82; the sequence is CGCGSCGGCG…RRTCRSCGCG (79 aa).

It belongs to the KRTAP type 28 family.

Functionally, in the hair cortex, hair keratin intermediate filaments are embedded in an interfilamentous matrix, consisting of hair keratin-associated proteins (KRTAP), which are essential for the formation of a rigid and resistant hair shaft through their extensive disulfide bond cross-linking with abundant cysteine residues of hair keratins. The matrix proteins include the high-sulfur and high-glycine-tyrosine keratins. In Homo sapiens (Human), this protein is Small cysteine and glycine repeat-containing protein 3.